The chain runs to 997 residues: Autophagy-related protein 9 (997 aa).

The Cytoplasmic portion of the chain corresponds to 1–318; sequence MERDEYQLPN…DVYNYYLGNG (318 aa). Serine 19 bears the Phosphoserine mark. Residues 29–39 are compositionally biased toward polar residues; the sequence is VNPSLNSQEMS. The interval 29 to 88 is disordered; that stretch reads VNPSLNSQEMSNFPLPDIERGSSLLHSTNDSREDVDENDLRVPESDQGTSTEEEDEVDEE. A compositionally biased stretch (acidic residues) spans 79 to 88; that stretch reads TEEEDEVDEE. Glycyl lysine isopeptide (Lys-Gly) (interchain with G-Cter in ubiquitin) cross-links involve residues lysine 113 and lysine 121. Serine 122 is modified (phosphoserine). Disordered regions lie at residues 127-159 and 214-234; these read LVEG…DGFD and HHDK…NQKH. Residue lysine 138 forms a Glycyl lysine isopeptide (Lys-Gly) (interchain with G-Cter in ubiquitin) linkage. 2 positions are modified to phosphoserine: serine 143 and serine 144. The span at 144–159 shows a compositional bias: acidic residues; that stretch reads SEEEEDNEFINNDGFD. The segment covering 221–233 has biased composition (polar residues); the sequence is ANNGPRNINGNQK. Residues 319–339 traverse the membrane as a helical segment; that stretch reads FYCIILEKILNICTLLFVVFV. The Lumenal segment spans residues 340-376; that stretch reads STYMGHCVDYSKLPTSHRVSDIIIDKCYSNSITGFTK. A helical membrane pass occupies residues 377 to 397; it reads FFLWMFYFFVILKIVQLYFDV. Residues 398–538 lie on the Cytoplasmic side of the membrane; it reads QKLSELQNFY…EELQKRFMLA (141 aa). An intramembrane segment occupies 539-559; the sequence is GFLNIILAPFLVTYFVLLYFF. Over 560–620 the chain is Cytoplasmic; that stretch reads RYFNEYKTSP…DQFPKEKTNL (61 aa). Residues 621-641 traverse the membrane as a helical segment; the sequence is FLKFVSFICGSFVAILAFLTV. At 642–656 the chain is on the lumenal side; that stretch reads FDPENFLNFEITSDR. Serine 657 is subject to Phosphoserine. The chain crosses the membrane as a helical span at residues 657–677; that stretch reads SVIFYITILGAIWSVSRNTIT. Over 678-723 the chain is Cytoplasmic; sequence QEYHVFDPEETLKELYEYTHYLPKEWEGRYHKEEIKLEFCKLYNLR. Lysine 701 participates in a covalent cross-link: Glycyl lysine isopeptide (Lys-Gly) (interchain with G-Cter in ubiquitin). An intramembrane segment occupies 724–744; the sequence is IVILLRELTSLMITPFVLWFS. The Cytoplasmic portion of the chain corresponds to 745–997; that stretch reads LPSSAGRIVD…EYYKKSDVGR (253 aa). Phosphoserine occurs at positions 787 and 792. Threonine 794 carries the post-translational modification Phosphothreonine. Serine 802 carries the phosphoserine modification. Threonine 804 carries the post-translational modification Phosphothreonine. Serine 831, serine 842, serine 864, serine 948, and serine 969 each carry phosphoserine.

The protein belongs to the ATG9 family. Homotrimer; forms a homotrimer with a central pore that forms a path between the two membrane leaflets. Interacts with ATG23 and ATG27 to form a cycling complex for trafficking to the PAS. Interacts (via N-terminus) with ATG11, required for recruitment of ATG9 to the PAS for the Cvt pathway during nutrient-rich conditions. Interacts (via N-terminus) with ATG17; required for recruitment to the PAS during autophagy and starved conditions. Interacts with ATG2 and ATG18; required for the retrieval of ATG9 from the PAS to the cytoplasmic pool. Interacts with ATG41. Interacts with the conserved oligomeric Golgi (COG) complex subunits COG3 and COG4. Interacts with TRS85. Post-translationally, phosphorylated by ATG1; phosphorylation is required for autophagy and cytoplasm to vacuole transport (Cvt) vesicle formation. Phosphorylation by ATG1 regulates ATG18 interaction and preautophagosome elongation. Phosphorylation at Ser-122 is required for selective autophagy by regulating anterograde trafficking and interaction with ATG23 and ATG27. Phosphorylation at Ser-122 prevents ubiquitination by the SCF(MET30) complex. Ubiquitinated by the SCF(MET30) complex in normal conditions, leading to its degradation by the proteasome, thereby preventing inappropriate induction of autophagy. Ubiquitination by the SCF(MET30) complex is prevented by phosphorylation at Ser-122.

The protein localises to the preautophagosomal structure membrane. Its subcellular location is the cytoplasmic vesicle membrane. It is found in the golgi apparatus membrane. The protein resides in the endoplasmic reticulum membrane. It localises to the mitochondrion membrane. It catalyses the reaction a 1,2-diacyl-sn-glycero-3-phosphocholine(in) = a 1,2-diacyl-sn-glycero-3-phosphocholine(out). The enzyme catalyses a 1,2-diacyl-sn-glycero-3-phospho-L-serine(in) = a 1,2-diacyl-sn-glycero-3-phospho-L-serine(out). The catalysed reaction is a 1,2-diacyl-sn-glycero-3-phosphoethanolamine(in) = a 1,2-diacyl-sn-glycero-3-phosphoethanolamine(out). It carries out the reaction a 1,2-diacyl-sn-glycero-3-phospho-(1D-myo-inositol-3-phosphate)(in) = a 1,2-diacyl-sn-glycero-3-phospho-(1D-myo-inositol-3-phosphate)(out). Phospholipid scramblase involved in autophagy and cytoplasm to vacuole transport (Cvt) vesicle formation. Cycles between the preautophagosomal structure/phagophore assembly site (PAS) and the cytoplasmic vesicle pool and supplies membrane for the growing autophagosome. Lipid scramblase activity plays a key role in preautophagosomal structure/phagophore assembly by distributing the phospholipids that arrive through ATG2 from the cytoplasmic to the luminal leaflet of the bilayer, thereby driving autophagosomal membrane expansion. Required for mitophagy. Also involved in endoplasmic reticulum-specific autophagic process and is essential for the survival of cells subjected to severe ER stress. Different machineries are required for anterograde trafficking to the PAS during either the Cvt pathway or bulk autophagy and for retrograde trafficking. Recruits vesicle-tethering proteins TRS85 and YPT1 to the autophagosome formation site. Also recruits ATG23 and ATG8 to the PAS. This Saccharomyces cerevisiae (strain YJM789) (Baker's yeast) protein is Autophagy-related protein 9.